We begin with the raw amino-acid sequence, 223 residues long: Deoxyribose-phosphate aldolase 2 (223 aa).

Catalysis depends on Asp92, which acts as the Proton donor/acceptor. Lys154 acts as the Schiff-base intermediate with acetaldehyde in catalysis. Lys183 acts as the Proton donor/acceptor in catalysis.

The protein belongs to the DeoC/FbaB aldolase family. DeoC type 1 subfamily.

The protein resides in the cytoplasm. It carries out the reaction 2-deoxy-D-ribose 5-phosphate = D-glyceraldehyde 3-phosphate + acetaldehyde. The protein operates within carbohydrate degradation; 2-deoxy-D-ribose 1-phosphate degradation; D-glyceraldehyde 3-phosphate and acetaldehyde from 2-deoxy-alpha-D-ribose 1-phosphate: step 2/2. Functionally, catalyzes a reversible aldol reaction between acetaldehyde and D-glyceraldehyde 3-phosphate to generate 2-deoxy-D-ribose 5-phosphate. The protein is Deoxyribose-phosphate aldolase 2 of Oceanobacillus iheyensis (strain DSM 14371 / CIP 107618 / JCM 11309 / KCTC 3954 / HTE831).